We begin with the raw amino-acid sequence, 220 residues long: Histone H1B (220 aa).

Disordered stretches follow at residues 1–45 and 99–220; these read MTAT…PSAS and QVKG…APKK. Residues 28–45 are compositionally biased toward low complexity; it reads KKVAGGAKAKKPSGPSAS. One can recognise an H15 domain in the interval 40–113; it reads SGPSASELIV…GASGSFKLNK (74 aa). Composition is skewed to basic residues over residues 122 to 134, 141 to 151, 158 to 196, and 204 to 220; these read AAKK…KAKK, KAPKSPKKPKK, SPKK…KPKT, and KVAK…APKK.

It belongs to the histone H1/H5 family.

The protein localises to the nucleus. It localises to the chromosome. Functionally, histones H1 are necessary for the condensation of nucleosome chains into higher-order structures. The polypeptide is Histone H1B (Xenopus laevis (African clawed frog)).